The following is a 309-amino-acid chain: N(5)-(carboxyethyl)ornithine synthase (309 aa).

The pyruvate site is built by arginine 15, lysine 71, and histidine 92. 171-176 (GSGNVA) contacts NADP(+).

It belongs to the AlaDH/PNT family. CEOS subfamily. As to quaternary structure, homotetramer.

The enzyme catalyses N(5)-[1(S)-1-carboxyethyl]-L-ornithine + NADP(+) + H2O = L-ornithine + pyruvate + NADPH + H(+). Its function is as follows. Catalyzes the NADPH-dependent reductive condensation between pyruvic acid and the side chain amino group of L-ornithine to form N(5)-(L-1-carboxyethyl)-L-ornithine. To a lesser extent, can also use L-lysine as substrate (yielding N(6)-(L-1-carboxyethyl)-L-lysine). In Lactococcus lactis subsp. lactis (strain IL1403) (Streptococcus lactis), this protein is N(5)-(carboxyethyl)ornithine synthase (ceo).